The sequence spans 428 residues: Sporulation kinase B (428 aa).

At 1–6 (MEILKD) the chain is on the cytoplasmic side. A helical transmembrane segment spans residues 7 to 27 (YLLHICFILFPILLYQVFWLG). Over 28-37 (KPAILVPKIN) the chain is Extracellular. A helical membrane pass occupies residues 38-58 (SGLVTLFACGASVLCIIFPIH). The Cytoplasmic portion of the chain corresponds to 59–68 (EMDYIQYGLQ). The chain crosses the membrane as a helical span at residues 69–89 (MIPVIICLFYISTASGLTVAA). The Extracellular portion of the chain corresponds to 90 to 99 (SVLCFELLFY). Residues 100–120 (EPSAMFVFTLLPFLIIIPILF) form a helical membrane-spanning segment. Residues 121-132 (QKKWPFMSKAKK) are Cytoplasmic-facing. The helical transmembrane segment at 133–153 (LLLSLLISCVEIFLFFASSWI) threads the bilayer. Over 154-166 (LSALNILNFQKSG) the chain is Extracellular. Residues 167–187 (IFVYEAAVSGLFRSSVLLLSI) traverse the membrane as a helical segment. Residues 188 to 428 (YIIESIAENI…TIKLPADLPH (241 aa)) are Cytoplasmic-facing. The region spanning 218–426 (SVAHEVRNPL…TVTIKLPADL (209 aa)) is the Histidine kinase domain. Residue H221 is modified to Phosphohistidine; by autocatalysis.

The protein resides in the cell membrane. The catalysed reaction is ATP + protein L-histidine = ADP + protein N-phospho-L-histidine.. Phosphorylates the sporulation-regulatory proteins spo0A and spo0F. Spo0F is required for the KinB activity. This is Sporulation kinase B (kinB) from Bacillus subtilis (strain 168).